An 86-amino-acid chain; its full sequence is Translation machinery-associated protein 10 (86 aa).

A phosphoserine mark is found at S28 and S79. Residues 63-86 form a disordered region; the sequence is NKTRRGSNSQNNERRLSDLQQYHI.

It belongs to the STF2 family. Associates with ribosomes.

The protein resides in the cytoplasm. The protein localises to the nucleus. In terms of biological role, may be involved in inhibition of the reverse ATPase reaction of mitochondrial F(1)F(0)-type ATP synthase. This Saccharomyces cerevisiae (strain ATCC 204508 / S288c) (Baker's yeast) protein is Translation machinery-associated protein 10.